Here is a 389-residue protein sequence, read N- to C-terminus: Probable protein phosphatase 2C 47 (389 aa).

In terms of domain architecture, PPM-type phosphatase spans 76–346 (RSGSFADIGP…DNLTVIVVCF (271 aa)). Aspartate 120, glycine 121, aspartate 294, and aspartate 337 together coordinate Mn(2+).

This sequence belongs to the PP2C family. The cofactor is Mg(2+). It depends on Mn(2+) as a cofactor.

It carries out the reaction O-phospho-L-seryl-[protein] + H2O = L-seryl-[protein] + phosphate. It catalyses the reaction O-phospho-L-threonyl-[protein] + H2O = L-threonyl-[protein] + phosphate. In Oryza sativa subsp. japonica (Rice), this protein is Probable protein phosphatase 2C 47.